Here is a 106-residue protein sequence, read N- to C-terminus: ATP-dependent Clp protease adapter protein ClpS (106 aa).

This sequence belongs to the ClpS family. As to quaternary structure, binds to the N-terminal domain of the chaperone ClpA.

Its function is as follows. Involved in the modulation of the specificity of the ClpAP-mediated ATP-dependent protein degradation. This Cronobacter sakazakii (strain ATCC BAA-894) (Enterobacter sakazakii) protein is ATP-dependent Clp protease adapter protein ClpS.